The primary structure comprises 198 residues: Large ribosomal subunit protein bL25 (198 aa).

Belongs to the bacterial ribosomal protein bL25 family. CTC subfamily. In terms of assembly, part of the 50S ribosomal subunit; part of the 5S rRNA/L5/L18/L25 subcomplex. Contacts the 5S rRNA. Binds to the 5S rRNA independently of L5 and L18.

Functionally, this is one of the proteins that binds to the 5S RNA in the ribosome where it forms part of the central protuberance. The polypeptide is Large ribosomal subunit protein bL25 (Streptomyces coelicolor (strain ATCC BAA-471 / A3(2) / M145)).